We begin with the raw amino-acid sequence, 944 residues long: Protein translocase subunit SecA (944 aa).

ATP-binding positions include Gln-77, 95 to 99, and Asp-484; that span reads GEGKT. Positions 920-944 are disordered; that stretch reads EQEKQTKKKKKKKPHDDETTKVKIG. Residues 933-944 are compositionally biased toward basic and acidic residues; that stretch reads PHDDETTKVKIG.

It belongs to the SecA family. As to quaternary structure, monomer and homodimer. Part of the essential Sec protein translocation apparatus which comprises SecA, SecYEG and auxiliary proteins SecDF. Other proteins may also be involved.

The protein localises to the cell membrane. It is found in the cytoplasm. It catalyses the reaction ATP + H2O + cellular proteinSide 1 = ADP + phosphate + cellular proteinSide 2.. In terms of biological role, part of the Sec protein translocase complex. Interacts with the SecYEG preprotein conducting channel. Has a central role in coupling the hydrolysis of ATP to the transfer of proteins into and across the cell membrane, serving as an ATP-driven molecular motor driving the stepwise translocation of polypeptide chains across the membrane. The chain is Protein translocase subunit SecA from Mycoplasma capricolum subsp. capricolum (strain California kid / ATCC 27343 / NCTC 10154).